The primary structure comprises 155 residues: FUN14 domain-containing protein 1 (155 aa).

Topologically, residues 1 to 47 (MASRNPPPQDYESDDESYEVLDLTEYARRHHWWNRVFGHSSGPMVEK) are cytoplasmic. 2 positions are modified to phosphoserine: S13 and S17. At Y18 the chain carries Phosphotyrosine; by SRC. Residues 18 to 21 (YEVL) carry the YXXL motif. Residues 48–68 (YSVATQIVMGGVTGWCAGFLF) form a helical membrane-spanning segment. The Mitochondrial intermembrane portion of the chain corresponds to 69–74 (QKVGKL). The chain crosses the membrane as a helical span at residues 75–95 (AATAVGGGFLLLQVASHSGYV). Residues 96–133 (QIDWKRVEKDVNKAKRQIKKRANKAAPEINNIIEEATD) lie on the Cytoplasmic side of the membrane. A Glycyl lysine isopeptide (Lys-Gly) (interchain with G-Cter in ubiquitin) cross-link involves residue K119. Residues 134–154 (FIKQNIVISSGFVGGFLLGLA) traverse the membrane as a helical segment. Position 155 (S155) is a topological domain, mitochondrial intermembrane.

Belongs to the FUN14 family. Interacts (via YXXL motif) with MAP1 LC3 family proteins MAP1LC3A, MAP1LC3B and GABARAP. Interacts with DNM1L/DPR1. Interacts with GPX4. Post-translationally, phosphorylation at Ser-13 by CK2 and at Tyr-18 by SRC inhibits activation of mitophagy. Following hypoxia, dephosphorylated at Tyr-18, leading to interaction with MAP1 LC3 family proteins and triggering mitophagy. Dephosphorylation is mediated by PGAM5. Phosphorylated by ULK1 at Ser-17 which enhances FUNDC1 binding to LC3. In terms of processing, ubiquitinated on Lys-119. Deubiquitinated by USP19; leading to hypoxia-induced DRP1 oligomerization and GTPase activity.

Its subcellular location is the mitochondrion outer membrane. In terms of biological role, integral mitochondrial outer-membrane protein that mediates the formation of mitochondria-associated endoplasmic reticulum membranes (MAMs). In turn, mediates angiogenesis and neoangiogenesis through interference with intracellular Ca(2+) communication and regulation of the vascular endothelial growth factor receptor KDR/VEGFR2 expression at both mRNA and protein levels. Also acts as an activator of hypoxia-induced mitophagy, an important mechanism for mitochondrial quality and homeostasis, by interacting with and recruiting LC3 protein family to mitochondria. Mechanistically, recruits DRP1 at ER-mitochondria contact sites leading to DRP1 oligomerization and GTPase activity to facilitate mitochondrial fission during hypoxia. Additionally, plays a role in hepatic ferroptosis by interacting directly with glutathione peroxidase/GPX4 to facilitate its recruitment into mitochondria through TOM/TIM complex where it is degraded by mitophagy. This is FUN14 domain-containing protein 1 (Fundc1) from Mus musculus (Mouse).